Reading from the N-terminus, the 417-residue chain is Serine hydroxymethyltransferase (417 aa).

Residues L121 and 125-127 (GHL) each bind (6S)-5,6,7,8-tetrahydrofolate. Position 229 is an N6-(pyridoxal phosphate)lysine (K229). 355–357 (SPF) contacts (6S)-5,6,7,8-tetrahydrofolate.

The protein belongs to the SHMT family. Homodimer. Requires pyridoxal 5'-phosphate as cofactor.

Its subcellular location is the cytoplasm. It carries out the reaction (6R)-5,10-methylene-5,6,7,8-tetrahydrofolate + glycine + H2O = (6S)-5,6,7,8-tetrahydrofolate + L-serine. Its pathway is one-carbon metabolism; tetrahydrofolate interconversion. The protein operates within amino-acid biosynthesis; glycine biosynthesis; glycine from L-serine: step 1/1. In terms of biological role, catalyzes the reversible interconversion of serine and glycine with tetrahydrofolate (THF) serving as the one-carbon carrier. This reaction serves as the major source of one-carbon groups required for the biosynthesis of purines, thymidylate, methionine, and other important biomolecules. Also exhibits THF-independent aldolase activity toward beta-hydroxyamino acids, producing glycine and aldehydes, via a retro-aldol mechanism. This chain is Serine hydroxymethyltransferase, found in Enterobacter sp. (strain 638).